Reading from the N-terminus, the 89-residue chain is Aminoacyl carrier protein 2 (89 aa).

One can recognise a Carrier domain in the interval 6 to 84 (INVQNRVLSV…AMERMILNQL (79 aa)). Serine 42 bears the O-(pantetheine 4'-phosphoryl)serine mark.

4'-phosphopantetheine is transferred from CoA to a specific serine of the apo-form of this carrier protein.

Its function is as follows. Aminoacyl carrier protein. Can be charged with L-glycine via the formation of a thioester bond between the amino acid and the 4'-phosphopantetheinyl prosthetic group, catalyzed by the bll6282 ligase. This Bradyrhizobium diazoefficiens (strain JCM 10833 / BCRC 13528 / IAM 13628 / NBRC 14792 / USDA 110) protein is Aminoacyl carrier protein 2.